We begin with the raw amino-acid sequence, 189 residues long: Protein OXIDATIVE STRESS 3 LIKE 2 (189 aa).

Disordered regions lie at residues 22–49 (SSST…SSYN) and 128–147 (AMSQ…LPTL). Over residues 33–44 (NSDDDEGGENEI) the composition is skewed to acidic residues.

It localises to the nucleus. In Arabidopsis thaliana (Mouse-ear cress), this protein is Protein OXIDATIVE STRESS 3 LIKE 2.